Consider the following 523-residue polypeptide: Peptide chain release factor 3 (523 aa).

In terms of domain architecture, tr-type G spans 8 to 275 (KKRRTFAIIS…TFLEYAPEPH (268 aa)). GTP-binding positions include 17–24 (SHPDAGKT), 85–89 (DTPGH), and 139–142 (NKLD).

Belongs to the TRAFAC class translation factor GTPase superfamily. Classic translation factor GTPase family. PrfC subfamily.

The protein localises to the cytoplasm. Increases the formation of ribosomal termination complexes and stimulates activities of RF-1 and RF-2. It binds guanine nucleotides and has strong preference for UGA stop codons. It may interact directly with the ribosome. The stimulation of RF-1 and RF-2 is significantly reduced by GTP and GDP, but not by GMP. The sequence is that of Peptide chain release factor 3 from Lactococcus lactis subsp. cremoris (strain SK11).